Here is a 584-residue protein sequence, read N- to C-terminus: Endogenous retrovirus group FC1 Env polyprotein (584 aa).

The N-terminal stretch at 1 to 22 (MARPSPLCLLLLLTLLTPIVPS) is a signal peptide. The Extracellular portion of the chain corresponds to 23 to 518 (NSLLTEPPFR…GWWQSPLTTW (496 aa)). Asn69 and Asn247 each carry an N-linked (GlcNAc...) asparagine glycan. Residues 251–254 (CFLC) carry the CXXC motif. 8 N-linked (GlcNAc...) asparagine glycosylation sites follow: Asn272, Asn276, Asn308, Asn313, Asn322, Asn334, Asn342, and Asn346. The fusion peptide stretch occupies residues 384-404 (AVFPPLVIGVSLTSSLVASGL). A CKS-17 motif is present at residues 449–465 (MQNRRALDLLTADKGGT). Cys466 and Cys473 are oxidised to a cystine. A CX6CC motif is present at residues 466–474 (CMFLGEECC). N-linked (GlcNAc...) asparagine glycosylation occurs at Asn478. The chain crosses the membrane as a helical span at residues 519-539 (IIPFISPILIICLLLLIAPCV). Over 540–584 (LKFIKNRISEVSRVTVNQMLLHPYSRLPTSEDHYDDALTQQEAAR) the chain is Cytoplasmic.

Belongs to the gamma type-C retroviral envelope protein family. HERV class-I F(c)1 env subfamily. As to quaternary structure, the surface (SU) and transmembrane (TM) proteins form a heterodimer. SU and TM are attached by noncovalent interactions or by a labile interchain disulfide bond. In terms of processing, specific enzymatic cleavages in vivo yield the mature SU and TM proteins. Post-translationally, the CXXC motif is highly conserved across a broad range of retroviral envelope proteins. It is thought to participate in the formation of a labile disulfide bond possibly with the CX6CC motif present in the transmembrane protein. Low expression in skin, testis and trachea.

It localises to the virion. It is found in the cell membrane. In terms of biological role, retroviral envelope proteins mediate receptor recognition and membrane fusion during early infection. Endogenous envelope proteins may have kept, lost or modified their original function during evolution. This endogenous envelope protein has lost its original fusogenic properties. SU mediates receptor recognition. Functionally, TM anchors the envelope heterodimer to the viral membrane through one transmembrane domain. The other hydrophobic domain, called fusion peptide, mediates fusion of the viral membrane with the target cell membrane. The protein is Endogenous retrovirus group FC1 Env polyprotein (ERVFC1) of Homo sapiens (Human).